Here is an 86-residue protein sequence, read N- to C-terminus: Small ribosomal subunit protein uS17 (86 aa).

The protein belongs to the universal ribosomal protein uS17 family. In terms of assembly, part of the 30S ribosomal subunit.

In terms of biological role, one of the primary rRNA binding proteins, it binds specifically to the 5'-end of 16S ribosomal RNA. This is Small ribosomal subunit protein uS17 from Bifidobacterium adolescentis (strain ATCC 15703 / DSM 20083 / NCTC 11814 / E194a).